Reading from the N-terminus, the 97-residue chain is Plastocyanin A/B (97 aa).

The Plastocyanin-like domain occupies 1–97 (AEVKLGSDDG…AGMKGEVTVN (97 aa)). 4 residues coordinate Cu cation: His-37, Cys-82, His-85, and Met-90.

It belongs to the plastocyanin family. Cu(2+) serves as cofactor.

It localises to the plastid. Its subcellular location is the chloroplast thylakoid membrane. Its function is as follows. Participates in electron transfer between P700 and the cytochrome b6-f complex in photosystem I. This is Plastocyanin A/B (PETE) from Petroselinum crispum (Parsley).